A 304-amino-acid chain; its full sequence is Elongation factor Ts (304 aa).

Residues 82–85 form an involved in Mg(2+) ion dislocation from EF-Tu region; sequence TDFV.

It belongs to the EF-Ts family.

Its subcellular location is the cytoplasm. Functionally, associates with the EF-Tu.GDP complex and induces the exchange of GDP to GTP. It remains bound to the aminoacyl-tRNA.EF-Tu.GTP complex up to the GTP hydrolysis stage on the ribosome. This chain is Elongation factor Ts, found in Symbiobacterium thermophilum (strain DSM 24528 / JCM 14929 / IAM 14863 / T).